The sequence spans 265 residues: Proteasome subunit alpha (265 aa).

Residues 236–265 (EKDSKGSKGAQNPKGARDSKNSKSYGESTD) form a disordered region.

It belongs to the peptidase T1A family. As to quaternary structure, the 20S proteasome core is composed of 14 alpha and 14 beta subunits that assemble into four stacked heptameric rings, resulting in a barrel-shaped structure. The two inner rings, each composed of seven catalytic beta subunits, are sandwiched by two outer rings, each composed of seven alpha subunits. The catalytic chamber with the active sites is on the inside of the barrel. Has a gated structure, the ends of the cylinder being occluded by the N-termini of the alpha-subunits. Is capped by the proteasome-associated ATPase, ARC.

The protein localises to the cytoplasm. The protein operates within protein degradation; proteasomal Pup-dependent pathway. The formation of the proteasomal ATPase ARC-20S proteasome complex, likely via the docking of the C-termini of ARC into the intersubunit pockets in the alpha-rings, may trigger opening of the gate for substrate entry. Interconversion between the open-gate and close-gate conformations leads to a dynamic regulation of the 20S proteasome proteolysis activity. Functionally, component of the proteasome core, a large protease complex with broad specificity involved in protein degradation. The chain is Proteasome subunit alpha from Mycobacterium leprae (strain Br4923).